We begin with the raw amino-acid sequence, 581 residues long: NADH-quinone oxidoreductase subunit C/D (581 aa).

Residues 1 to 172 (MSGTDLVSEL…PLFNMTAALF (172 aa)) are NADH dehydrogenase I subunit C. Positions 196–581 (ELMILNYGPH…IDYVMSDVDR (386 aa)) are NADH dehydrogenase I subunit D.

This sequence in the N-terminal section; belongs to the complex I 30 kDa subunit family. The protein in the C-terminal section; belongs to the complex I 49 kDa subunit family. NDH-1 is composed of 13 different subunits. Subunits NuoB, CD, E, F, and G constitute the peripheral sector of the complex.

The protein resides in the cell inner membrane. The catalysed reaction is a quinone + NADH + 5 H(+)(in) = a quinol + NAD(+) + 4 H(+)(out). Its function is as follows. NDH-1 shuttles electrons from NADH, via FMN and iron-sulfur (Fe-S) centers, to quinones in the respiratory chain. The immediate electron acceptor for the enzyme in this species is believed to be ubiquinone. Couples the redox reaction to proton translocation (for every two electrons transferred, four hydrogen ions are translocated across the cytoplasmic membrane), and thus conserves the redox energy in a proton gradient. This is NADH-quinone oxidoreductase subunit C/D from Rhodopseudomonas palustris (strain BisB5).